The sequence spans 487 residues: Transcription factor GTE5, chloroplastic (487 aa).

Residues 1–32 (MSSEHISGGGASKTKKHKWSSSQNRPKPMGVS) constitute a chloroplast transit peptide. Disordered stretches follow at residues 1–48 (MSSE…NSFA), 93–127 (ANPG…GADK), and 400–487 (KNEA…DNGN). The 107-residue stretch at 127–233 (KGTVQIFKNC…NMFEDKWVSI (107 aa)) folds into the Bromo domain. Positions 320 to 401 (EEEAPVNNRD…GYKESLSKKN (82 aa)) constitute an NET domain. The span at 400–414 (KNEAHGFGSERDAES) shows a compositional bias: basic and acidic residues. Positions 415–435 (VHNSIQEPTTLVSGTTTSRVT) are enriched in polar residues. Positions 451 to 487 (NNASGSSSSNSSSSDSGSCSSDTDSDSSSGRGSDNGN) are enriched in low complexity.

As to quaternary structure, interacts with SIZ1 (via PHD domain). Post-translationally, sumoylated by SIZ1.

It localises to the plastid. Its subcellular location is the chloroplast. The sequence is that of Transcription factor GTE5, chloroplastic (GTE5) from Arabidopsis thaliana (Mouse-ear cress).